Consider the following 248-residue polypeptide: Tropomyosin alpha-4 chain (248 aa).

At A2 the chain carries N-acetylalanine. The stretch at 2-248 forms a coiled coil; it reads AGLNSLEAVK…DQTLNELNCI (247 aa). S6 carries the post-translational modification Phosphoserine. The interval 15–47 is disordered; sequence QALQQQADEAEDRAQGLQRELDGERERREKAEG. Positions 33 to 47 are enriched in basic and acidic residues; the sequence is RELDGERERREKAEG. K177 and K215 each carry N6-acetyllysine. T216 carries the post-translational modification Phosphothreonine.

The protein belongs to the tropomyosin family. As to quaternary structure, homodimer. Heterodimer of an alpha (TPM1, TPM3 or TPM4) and a beta (TPM2) chain. In terms of tissue distribution, detected in cardiac tissue and platelets, the form found in cardiac tissue is a higher molecular weight than the form found in platelets. Expressed at higher levels in the platelets of hypertensive patients with cardiac hypertrophy than in the platelets of hypertensive patients without cardiac hypertrophy (at protein level).

It localises to the cytoplasm. The protein localises to the cytoskeleton. Binds to actin filaments in muscle and non-muscle cells. Plays a central role, in association with the troponin complex, in the calcium dependent regulation of vertebrate striated muscle contraction. Smooth muscle contraction is regulated by interaction with caldesmon. In non-muscle cells is implicated in stabilizing cytoskeleton actin filaments. Binds calcium. Plays a role in platelet biogenesis. In Homo sapiens (Human), this protein is Tropomyosin alpha-4 chain (TPM4).